A 506-amino-acid polypeptide reads, in one-letter code: Secreted RxLR effector protein 134 (506 aa).

The first 19 residues, 1–19, serve as a signal peptide directing secretion; the sequence is MQGAYCVAVALLIAASGQA. The short motif at 50 to 71 is the RxLR-dEER element; it reads RVLQVSHYPKDDLMLLAGNEER.

Belongs to the RxLR effector family.

Its subcellular location is the secreted. The protein localises to the host nucleus. Its function is as follows. Secreted effector that completely suppresses the host cell death induced by cell death-inducing proteins. The sequence is that of Secreted RxLR effector protein 134 from Plasmopara viticola (Downy mildew of grapevine).